A 435-amino-acid polypeptide reads, in one-letter code: Type A flavoprotein fprA (435 aa).

Positions alanine 48–leucine 228 are zinc metallo-hydrolase. Fe cation-binding residues include histidine 98, glutamate 100, aspartate 102, histidine 167, aspartate 186, and histidine 243. One can recognise a Flavodoxin-like domain in the interval leucine 276–alanine 415.

In the N-terminal section; belongs to the zinc metallo-hydrolase group 3 family. As to quaternary structure, homodimer. FMN is required as a cofactor. Requires Fe cation as cofactor.

In terms of biological role, low-potential electron donor to a number of redox enzymes. In Rhodobacter capsulatus (strain ATCC BAA-309 / NBRC 16581 / SB1003), this protein is Type A flavoprotein fprA (fprA).